The sequence spans 776 residues: Lysyl oxidase homolog 2 (776 aa).

An N-terminal signal peptide occupies residues 1–25 (MELHFGSCLSGCLALLVLLPSLSLA). SRCR domains follow at residues 61–162 (VRLA…VVCS), 191–305 (IRPI…VSCV), 329–428 (VRLR…VRCN), and 438–546 (VRLN…VACS). Disulfide bonds link cysteine 87–cysteine 151, cysteine 100–cysteine 161, cysteine 131–cysteine 141, cysteine 221–cysteine 294, cysteine 234–cysteine 304, cysteine 268–cysteine 278, cysteine 354–cysteine 417, cysteine 367–cysteine 427, and cysteine 398–cysteine 408. N-linked (GlcNAc...) asparagine glycosylation occurs at asparagine 267. N-linked (GlcNAc...) asparagine glycosylation occurs at asparagine 291. The N-linked (GlcNAc...) asparagine glycan is linked to asparagine 458. 3 cysteine pairs are disulfide-bonded: cysteine 467-cysteine 532, cysteine 480-cysteine 545, and cysteine 514-cysteine 524. The lysyl-oxidase like stretch occupies residues 550–753 (PDLVLNAEIV…WMYNCHVGGA (204 aa)). Positions 551 and 552 each coordinate Ca(2+). 4 cysteine pairs are disulfide-bonded: cysteine 575-cysteine 627, cysteine 581-cysteine 697, cysteine 659-cysteine 675, and cysteine 665-cysteine 687. Cu cation-binding residues include histidine 628, histidine 630, and histidine 632. Asparagine 646 carries N-linked (GlcNAc...) asparagine glycosylation. Residues 655–691 (KASFCLEDTECEGDIQKSYECANFGEQGITMGCWDMY) constitute a cross-link (lysine tyrosylquinone (Lys-Tyr)). A 2',4',5'-topaquinone modification is found at tyrosine 691. Ca(2+)-binding residues include glutamate 724, aspartate 726, asparagine 729, and asparagine 730. Cysteine 734 and cysteine 748 are oxidised to a cystine.

It belongs to the lysyl oxidase family. In terms of assembly, component of some chromatin repressor complex. Interacts with SNAI1. Interacts with TAF10. Interacts with HSPA5. Interacts with EFEMP2. The cofactor is Cu cation. Requires lysine tyrosylquinone residue as cofactor. The lysine tyrosylquinone cross-link (LTQ) is generated by condensation of the epsilon-amino group of a lysine with a topaquinone produced by oxidation of tyrosine. In terms of processing, N-glycosylated. N-glycosylation on Asn-458 and Asn-646 may be essential for proper folding and secretion; may be composed of a fucosylated carbohydrates attached to a trimannose N-linked glycan core. In terms of tissue distribution, ubiquitous. Highest expression in skin, lung and thymus. Present in chondrocytes: mainly expressed by chondrocytes in healing fractures and in epiphyseal growth plates (at protein level).

The protein localises to the secreted. It localises to the extracellular space. Its subcellular location is the extracellular matrix. It is found in the basement membrane. The protein resides in the nucleus. The protein localises to the chromosome. It localises to the endoplasmic reticulum. It carries out the reaction L-lysyl-[protein] + O2 + H2O = (S)-2-amino-6-oxohexanoyl-[protein] + H2O2 + NH4(+). Its activity is regulated as follows. Specifically inhibited by a mouse monoclonal antibody AB0023, inhibition occurs in a non-competitive manner. Its function is as follows. Mediates the post-translational oxidative deamination of lysine residues on target proteins leading to the formation of deaminated lysine (allysine). Acts as a transcription corepressor and specifically mediates deamination of trimethylated 'Lys-4' of histone H3 (H3K4me3), a specific tag for epigenetic transcriptional activation. Shows no activity against histone H3 when it is trimethylated on 'Lys-9' (H3K9me3) or 'Lys-27' (H3K27me3) or when 'Lys-4' is monomethylated (H3K4me1) or dimethylated (H3K4me2). Also mediates deamination of methylated TAF10, a member of the transcription factor IID (TFIID) complex, which induces release of TAF10 from promoters, leading to inhibition of TFIID-dependent transcription. LOXL2-mediated deamination of TAF10 results in transcriptional repression of genes required for embryonic stem cell pluripotency including POU5F1/OCT4, NANOG, KLF4 and SOX2. Involved in epithelial to mesenchymal transition (EMT) via interaction with SNAI1 and participates in repression of E-cadherin, probably by mediating deamination of histone H3. During EMT, involved with SNAI1 in negatively regulating pericentromeric heterochromatin transcription. SNAI1 recruits LOXL2 to pericentromeric regions to oxidize histone H3 and repress transcription which leads to release of heterochromatin component CBX5/HP1A, enabling chromatin reorganization and acquisition of mesenchymal traits. Interacts with the endoplasmic reticulum protein HSPA5 which activates the IRE1-XBP1 pathway of the unfolded protein response, leading to expression of several transcription factors involved in EMT and subsequent EMT induction. When secreted into the extracellular matrix, promotes cross-linking of extracellular matrix proteins by mediating oxidative deamination of peptidyl lysine residues in precursors to fibrous collagen and elastin. Acts as a regulator of sprouting angiogenesis, probably via collagen IV scaffolding. Acts as a regulator of chondrocyte differentiation, probably by regulating expression of factors that control chondrocyte differentiation. The chain is Lysyl oxidase homolog 2 (Loxl2) from Mus musculus (Mouse).